We begin with the raw amino-acid sequence, 713 residues long: Low-density lipoprotein receptor-related protein 10 (713 aa).

A signal peptide spans 1 to 16 (MLLATLLLLLLGGALA). The Extracellular segment spans residues 17–440 (HPDRIIFPNH…WDCSYVLPRK (424 aa)). Disulfide bonds link cysteine 28–cysteine 57 and cysteine 80–cysteine 98. The CUB 1 domain maps to 28-136 (CEDPPAVLLE…QGFLLSYSQD (109 aa)). Asparagine 56 is a glycosylation site (N-linked (GlcNAc...) asparagine). Asparagine 111 carries an N-linked (GlcNAc...) asparagine glycan. One can recognise an LDL-receptor class A 1 domain in the interval 139 to 175 (MCLQEEFQCLNHRCVSAVQRCDGVDACGDGSDEAGCS). Cystine bridges form between cysteine 140/cysteine 152, cysteine 147/cysteine 165, cysteine 159/cysteine 174, and cysteine 192/cysteine 220. Residues 192–305 (CNVTLEDFYG…RGFNATYHVR (114 aa)) form the CUB 2 domain. Asparagine 193 and asparagine 299 each carry an N-linked (GlcNAc...) asparagine glycan. 3 consecutive LDL-receptor class A domains span residues 307-354 (YCLP…EDCP), 355-397 (GCPP…RRCR), and 398-434 (HCQP…WDCS). 9 cysteine pairs are disulfide-bonded: cysteine 308–cysteine 331, cysteine 315–cysteine 344, cysteine 338–cysteine 353, cysteine 356–cysteine 374, cysteine 363–cysteine 387, cysteine 381–cysteine 396, cysteine 399–cysteine 411, cysteine 406–cysteine 424, and cysteine 418–cysteine 433. A helical transmembrane segment spans residues 441-461 (VITAAVIGSLVCGLLLVIALG). At 462–713 (CTCKLYAIRT…AEAEDEPLLT (252 aa)) the chain is on the cytoplasmic side. Residues 564-637 (GLLPRTNTPA…SPAPTTVPEA (74 aa)) are disordered. The segment covering 569–584 (TNTPARASEARSQVTP) has biased composition (polar residues). A Phosphothreonine modification is found at threonine 596. Positions 621 to 636 (PLPSASTSPAPTTVPE) are enriched in low complexity.

It belongs to the LDLR family. As to expression, expressed in blood leukocyte, lung, placenta, small intestine, liver, kidney, spleen, thymus, colon, skeletal muscle and heart.

Its subcellular location is the membrane. It is found in the coated pit. Its function is as follows. Probable receptor, which is involved in the internalization of lipophilic molecules and/or signal transduction. May be involved in the uptake of lipoprotein APOE in liver. The sequence is that of Low-density lipoprotein receptor-related protein 10 (LRP10) from Homo sapiens (Human).